Reading from the N-terminus, the 179-residue chain is UPF0302 protein YpiB (179 aa).

The protein belongs to the UPF0302 family.

This chain is UPF0302 protein YpiB (ypiB), found in Bacillus subtilis (strain 168).